A 262-amino-acid polypeptide reads, in one-letter code: Glutamate racemase (262 aa).

Substrate is bound by residues 7–8 (DS) and 39–40 (YG). C70 functions as the Proton donor/acceptor in the catalytic mechanism. 71 to 72 (NT) is a binding site for substrate. Residue C182 is the Proton donor/acceptor of the active site. Residue 183–184 (TH) coordinates substrate.

This sequence belongs to the aspartate/glutamate racemases family.

The enzyme catalyses L-glutamate = D-glutamate. Its pathway is cell wall biogenesis; peptidoglycan biosynthesis. Provides the (R)-glutamate required for cell wall biosynthesis. In Campylobacter concisus (strain 13826), this protein is Glutamate racemase.